A 218-amino-acid chain; its full sequence is Glutathione S-transferase (218 aa).

Positions 3-88 (SKPVLGYWDI…YIGRKYKLTG (86 aa)) constitute a GST N-terminal domain. Residues 9–10 (YW), 43–46 (RSAW), K50, 59–60 (NL), and 72–73 (QT) each bind glutathione. Residues 90–206 (NEPEELRVSL…YIKAQQPKLF (117 aa)) form the GST C-terminal domain. Y116 contributes to the substrate binding site.

It belongs to the GST superfamily. Mu family.

The enzyme catalyses RX + glutathione = an S-substituted glutathione + a halide anion + H(+). Conjugation of reduced glutathione to a wide number of exogenous and endogenous hydrophobic electrophiles. The polypeptide is Glutathione S-transferase (Tyrophagus putrescentiae (Mold mite)).